The sequence spans 93 residues: Small ribosomal subunit protein uS15 (93 aa).

This sequence belongs to the universal ribosomal protein uS15 family. Part of the 30S ribosomal subunit. Forms a bridge to the 50S subunit in the 70S ribosome, contacting the 23S rRNA.

Its function is as follows. One of the primary rRNA binding proteins, it binds directly to 16S rRNA where it helps nucleate assembly of the platform of the 30S subunit by binding and bridging several RNA helices of the 16S rRNA. Forms an intersubunit bridge (bridge B4) with the 23S rRNA of the 50S subunit in the ribosome. This chain is Small ribosomal subunit protein uS15, found in Anaplasma phagocytophilum (strain HZ).